A 47-amino-acid polypeptide reads, in one-letter code: Bacteriocin curvaticin DN317 (47 aa).

Belongs to the bacteriocin class IIA/YGNGV family.

The protein resides in the secreted. Its function is as follows. Has bactericidal activity against various Gram-negative Campylobacter, and the Gram-positive L.monocytogenes and B.subtilis. In vitro, inhibits C.jejuni strain ATCC 33560 (MIC=27.3 ug/ml). The protein is Bacteriocin curvaticin DN317 of Latilactobacillus curvatus (Lactobacillus curvatus).